The chain runs to 470 residues: ATP synthase subunit beta (470 aa).

155-162 (GGAGVGKT) contributes to the ATP binding site.

Belongs to the ATPase alpha/beta chains family. F-type ATPases have 2 components, CF(1) - the catalytic core - and CF(0) - the membrane proton channel. CF(1) has five subunits: alpha(3), beta(3), gamma(1), delta(1), epsilon(1). CF(0) has three main subunits: a(1), b(2) and c(9-12). The alpha and beta chains form an alternating ring which encloses part of the gamma chain. CF(1) is attached to CF(0) by a central stalk formed by the gamma and epsilon chains, while a peripheral stalk is formed by the delta and b chains.

It is found in the cell membrane. It carries out the reaction ATP + H2O + 4 H(+)(in) = ADP + phosphate + 5 H(+)(out). In terms of biological role, produces ATP from ADP in the presence of a proton gradient across the membrane. The catalytic sites are hosted primarily by the beta subunits. The protein is ATP synthase subunit beta of Staphylococcus epidermidis (strain ATCC 35984 / DSM 28319 / BCRC 17069 / CCUG 31568 / BM 3577 / RP62A).